Reading from the N-terminus, the 447-residue chain is Na(+)-translocating NADH-quinone reductase subunit A (447 aa).

It belongs to the NqrA family. As to quaternary structure, composed of six subunits; NqrA, NqrB, NqrC, NqrD, NqrE and NqrF.

It carries out the reaction a ubiquinone + n Na(+)(in) + NADH + H(+) = a ubiquinol + n Na(+)(out) + NAD(+). Its function is as follows. NQR complex catalyzes the reduction of ubiquinone-1 to ubiquinol by two successive reactions, coupled with the transport of Na(+) ions from the cytoplasm to the periplasm. NqrA to NqrE are probably involved in the second step, the conversion of ubisemiquinone to ubiquinol. The polypeptide is Na(+)-translocating NADH-quinone reductase subunit A (Haemophilus influenzae (strain ATCC 51907 / DSM 11121 / KW20 / Rd)).